A 209-amino-acid chain; its full sequence is Probable GTP-binding protein EngB (209 aa).

The EngB-type G domain occupies 12–203; sequence INLEIIFAGR…RDRLHEMKRD (192 aa). GTP-binding positions include 20–27, 45–49, 62–65, 142–145, and 179–181; these read GRSNVGKS, GVTLR, DMPG, NKMD, and ISA. Residues Ser27 and Thr47 each coordinate Mg(2+).

Belongs to the TRAFAC class TrmE-Era-EngA-EngB-Septin-like GTPase superfamily. EngB GTPase family. Requires Mg(2+) as cofactor.

Functionally, necessary for normal cell division and for the maintenance of normal septation. This chain is Probable GTP-binding protein EngB, found in Methanosarcina mazei (strain ATCC BAA-159 / DSM 3647 / Goe1 / Go1 / JCM 11833 / OCM 88) (Methanosarcina frisia).